The primary structure comprises 251 residues: Pyrroloquinoline-quinone synthase (251 aa).

The protein belongs to the PqqC family.

The catalysed reaction is 6-(2-amino-2-carboxyethyl)-7,8-dioxo-1,2,3,4,7,8-hexahydroquinoline-2,4-dicarboxylate + 3 O2 = pyrroloquinoline quinone + 2 H2O2 + 2 H2O + H(+). The protein operates within cofactor biosynthesis; pyrroloquinoline quinone biosynthesis. Ring cyclization and eight-electron oxidation of 3a-(2-amino-2-carboxyethyl)-4,5-dioxo-4,5,6,7,8,9-hexahydroquinoline-7,9-dicarboxylic-acid to PQQ. This is Pyrroloquinoline-quinone synthase from Pseudomonas putida (strain W619).